The primary structure comprises 185 residues: Ribosome-recycling factor (185 aa).

It belongs to the RRF family.

It localises to the cytoplasm. Responsible for the release of ribosomes from messenger RNA at the termination of protein biosynthesis. May increase the efficiency of translation by recycling ribosomes from one round of translation to another. This Bacillus cereus (strain ATCC 10987 / NRS 248) protein is Ribosome-recycling factor.